Here is a 314-residue protein sequence, read N- to C-terminus: Homeobox-leucine zipper protein HAT7 (314 aa).

Residues 77–109 form a disordered region; it reads HHHLTQKSPTTTNNMNDQDQVGEEDNLSDDGSH. The segment covering 82-95 has biased composition (polar residues); that stretch reads QKSPTTTNNMNDQD. The segment at residues 112–171 is a DNA-binding region (homeobox); that stretch reads LGEKKKRLNLEQVRALEKSFELGNKLEPERKMQLAKALGLQPRQIAIWFQNRRARWKTKQ. Residues 172-207 are leucine-zipper; sequence LERDYDSLKKQFDVLKSDNDSLLAHNKKLHAELVAL.

Belongs to the HD-ZIP homeobox family. Class I subfamily. As to expression, expressed predominantly in flowers, and in the cortex of the root and the stem.

It localises to the nucleus. In terms of biological role, probable transcription factor. The chain is Homeobox-leucine zipper protein HAT7 (HAT7) from Arabidopsis thaliana (Mouse-ear cress).